We begin with the raw amino-acid sequence, 135 residues long: Immunity protein RhsIA (135 aa).

The tract at residues 58–77 (RKQGRQISLSCGEPPEYSPD) is disordered.

Functionally, immunity component of a toxin-immunity protein module, which functions as a cellular contact-dependent growth inhibition (CDI) system. Specifically inhibits its cognate toxin RhsA. Cell contact is necessary for growth inhibition. This is Immunity protein RhsIA (rhsIA) from Dickeya dadantii (strain 3937) (Erwinia chrysanthemi (strain 3937)).